The following is a 350-amino-acid chain: Biotin synthase (350 aa).

Residues 63–281 form the Radical SAM core domain; sequence GDIELATLLS…IAVARITMPK (219 aa). Residues Cys78, Cys82, and Cys85 each contribute to the [4Fe-4S] cluster site. The [2Fe-2S] cluster site is built by Cys122, Cys153, Cys213, and Arg285.

Belongs to the radical SAM superfamily. Biotin synthase family. In terms of assembly, homodimer. It depends on [4Fe-4S] cluster as a cofactor. [2Fe-2S] cluster serves as cofactor.

It carries out the reaction (4R,5S)-dethiobiotin + (sulfur carrier)-SH + 2 reduced [2Fe-2S]-[ferredoxin] + 2 S-adenosyl-L-methionine = (sulfur carrier)-H + biotin + 2 5'-deoxyadenosine + 2 L-methionine + 2 oxidized [2Fe-2S]-[ferredoxin]. It participates in cofactor biosynthesis; biotin biosynthesis; biotin from 7,8-diaminononanoate: step 2/2. Functionally, catalyzes the conversion of dethiobiotin (DTB) to biotin by the insertion of a sulfur atom into dethiobiotin via a radical-based mechanism. This chain is Biotin synthase, found in Acidovorax sp. (strain JS42).